We begin with the raw amino-acid sequence, 391 residues long: Ammonium transporter Amt1 (391 aa).

10 helical membrane passes run 12 to 32 (VFFF…FIAL), 51 to 71 (LDLA…SYGF), 88 to 108 (AWWM…TGGV), 112 to 132 (IKIL…YPIV), 152 to 172 (AGSG…AYVL), 192 to 212 (IPIA…FNIG), 223 to 243 (LASV…GGAL), 261 to 281 (VAVC…VGLL), 305 to 325 (IGPV…IPFL), and 338 to 358 (GQII…LIIY).

It belongs to the ammonia transporter channel (TC 1.A.11.2) family. Homotrimer. Interacts and forms a complex with GlnK1.

Its subcellular location is the cell membrane. With respect to regulation, activity is regulated by the nitrogen regulatory protein GlnK1 via direct interaction. Formation of the GlnK1/Amt1 complex is decreased in the presence of Mg-ATP or 2-oxoglutarate. The presence of both effectors abolishes the formation of the complex. Involved in the uptake of ammonium/ammonia (NH(4)(+)/NH(3)). Transport is electrogenic. The polypeptide is Ammonium transporter Amt1 (Methanocaldococcus jannaschii (strain ATCC 43067 / DSM 2661 / JAL-1 / JCM 10045 / NBRC 100440) (Methanococcus jannaschii)).